The following is a 353-amino-acid chain: Ferredoxin--NADP reductase 1 (353 aa).

Residues Thr14, Asp33, Gln41, Tyr46, Ala86, Phe121, Asp289, and Thr330 each coordinate FAD.

It belongs to the ferredoxin--NADP reductase type 2 family. As to quaternary structure, homodimer. Requires FAD as cofactor.

The catalysed reaction is 2 reduced [2Fe-2S]-[ferredoxin] + NADP(+) + H(+) = 2 oxidized [2Fe-2S]-[ferredoxin] + NADPH. This Christiangramia forsetii (strain DSM 17595 / CGMCC 1.15422 / KT0803) (Gramella forsetii) protein is Ferredoxin--NADP reductase 1.